The following is a 108-amino-acid chain: Putative DNA-directed RNA polymerase subunit 1 inactive homolog (108 aa).

The protein is Putative DNA-directed RNA polymerase subunit 1 inactive homolog of Acanthamoeba polyphaga (Amoeba).